The primary structure comprises 509 residues: MDEFXXNSNKNRXWQQFFXYPLFFREDLXAIXHDHHLDRFGSSEPKEIXVXNFXSFLTVKRSIRRICKQNKSISLFGNSDSNKLIEYNKNFSFKSMLEGFTIVLEVSIAMRSKHFIKGMDGWNSLRSIHCIFPFMEDKLPHSNYISDIRVPYSIHPEILVRIFRRWIRDVPSLHLLRSILHEWKNSFSRENLEKVLITQRENTRFSLFLWNSYVYECESFLIPLIKRFFNSQSLLYGSFPDRTHFEKKIKDIVIFPLHKISTKKIWLLKDSFIHYVRYGERSLIALKGTHLQVKKCRYHLFHFWQYFFHLWFQPYRICSLELSKTSFSFLGFFIHVKMRPLVVRAKMLDDLFITDLITNELNPIAPIRSILFSLAKEKFCDISGWPISKLSWTSLSDDDIXDRFDRIWINLFHYYSGSINQDGLYHIKYILLLSCAKTLACKHKSTIRVVREQLGSELFTKSFSKEREFISSSFSKTRSQRERIWNSEISQRNPLXXLWQKMENKQIEN.

Belongs to the intron maturase 2 family. MatK subfamily.

The protein resides in the plastid. It localises to the chloroplast. Usually encoded in the trnK tRNA gene intron. Probably assists in splicing its own and other chloroplast group II introns. The chain is Maturase K from Thujopsis dolabrata (Hiba arborvitae).